A 280-amino-acid chain; its full sequence is MLQSRFKMPSHDELVKRMDAIPDHVMRECPICHAKFLSMRLGRDHTCPKCGYGFRILAKRRVKITFDKFTEIDQNITVPDRYTDEKYRAKIAKAKKVTGLNESVLTGIGSLNKQQVAVGIMDPFWIMGSLGSATGEKITRLFELATRKDLPVVMFTSSGGARMQEGIHSLMQMAKVSSAVAEHSAAGLLYIVVLCDPTTGGVTASFAMDGDIILAEPHALVGFAGRRVIEQTIMQTPPKDFQSAETVMKHGFIDQIVKRSDMKKTLTQLLRLHTKENAYG.

The CoA carboxyltransferase N-terminal domain maps to V25–G280. Zn(2+) is bound by residues C29, C32, C47, and C50. Residues C29–C50 form a C4-type zinc finger.

The protein belongs to the AccD/PCCB family. Acetyl-CoA carboxylase is a heterohexamer composed of biotin carboxyl carrier protein (AccB), biotin carboxylase (AccC) and two subunits each of ACCase subunit alpha (AccA) and ACCase subunit beta (AccD). The cofactor is Zn(2+).

Its subcellular location is the cytoplasm. It carries out the reaction N(6)-carboxybiotinyl-L-lysyl-[protein] + acetyl-CoA = N(6)-biotinyl-L-lysyl-[protein] + malonyl-CoA. Its pathway is lipid metabolism; malonyl-CoA biosynthesis; malonyl-CoA from acetyl-CoA: step 1/1. In terms of biological role, component of the acetyl coenzyme A carboxylase (ACC) complex. Biotin carboxylase (BC) catalyzes the carboxylation of biotin on its carrier protein (BCCP) and then the CO(2) group is transferred by the transcarboxylase to acetyl-CoA to form malonyl-CoA. The chain is Acetyl-coenzyme A carboxylase carboxyl transferase subunit beta from Lactobacillus helveticus (strain DPC 4571).